The following is a 194-amino-acid chain: Holliday junction branch migration complex subunit RuvA (194 aa).

A domain I region spans residues 1-63 (MFEYLKGTVA…EDELSLYGFM (63 aa)). The segment at 64 to 142 (SIEELDMFQK…KTNVVYDYTL (79 aa)) is domain II. Residues 143-151 (FNDDHKDDD) are flexible linker. The domain III stretch occupies residues 151 to 194 (DEAVQALMALGYSKLESEKAVEAVRDMSLGTEDVIKRALKWLMK).

The protein belongs to the RuvA family. Homotetramer. Forms an RuvA(8)-RuvB(12)-Holliday junction (HJ) complex. HJ DNA is sandwiched between 2 RuvA tetramers; dsDNA enters through RuvA and exits via RuvB. An RuvB hexamer assembles on each DNA strand where it exits the tetramer. Each RuvB hexamer is contacted by two RuvA subunits (via domain III) on 2 adjacent RuvB subunits; this complex drives branch migration. In the full resolvosome a probable DNA-RuvA(4)-RuvB(12)-RuvC(2) complex forms which resolves the HJ.

Its subcellular location is the cytoplasm. Its function is as follows. The RuvA-RuvB-RuvC complex processes Holliday junction (HJ) DNA during genetic recombination and DNA repair, while the RuvA-RuvB complex plays an important role in the rescue of blocked DNA replication forks via replication fork reversal (RFR). RuvA specifically binds to HJ cruciform DNA, conferring on it an open structure. The RuvB hexamer acts as an ATP-dependent pump, pulling dsDNA into and through the RuvAB complex. HJ branch migration allows RuvC to scan DNA until it finds its consensus sequence, where it cleaves and resolves the cruciform DNA. This Alkaliphilus oremlandii (strain OhILAs) (Clostridium oremlandii (strain OhILAs)) protein is Holliday junction branch migration complex subunit RuvA.